A 505-amino-acid polypeptide reads, in one-letter code: ATP synthase subunit beta (505 aa).

157–164 (GGAGVGKT) is an ATP binding site.

This sequence belongs to the ATPase alpha/beta chains family. As to quaternary structure, F-type ATPases have 2 components, CF(1) - the catalytic core - and CF(0) - the membrane proton channel. CF(1) has five subunits: alpha(3), beta(3), gamma(1), delta(1), epsilon(1). CF(0) has three main subunits: a(1), b(2) and c(9-12). The alpha and beta chains form an alternating ring which encloses part of the gamma chain. CF(1) is attached to CF(0) by a central stalk formed by the gamma and epsilon chains, while a peripheral stalk is formed by the delta and b chains.

The protein localises to the cell inner membrane. It catalyses the reaction ATP + H2O + 4 H(+)(in) = ADP + phosphate + 5 H(+)(out). Functionally, produces ATP from ADP in the presence of a proton gradient across the membrane. The catalytic sites are hosted primarily by the beta subunits. The sequence is that of ATP synthase subunit beta from Bacteroides thetaiotaomicron (strain ATCC 29148 / DSM 2079 / JCM 5827 / CCUG 10774 / NCTC 10582 / VPI-5482 / E50).